Here is an 87-residue protein sequence, read N- to C-terminus: Small ribosomal subunit protein bS20 (87 aa).

Positions 1 to 22 (MAHHKSAIKRIKQNAKKNARNR) are disordered.

It belongs to the bacterial ribosomal protein bS20 family.

Its function is as follows. Binds directly to 16S ribosomal RNA. The chain is Small ribosomal subunit protein bS20 from Pelobacter propionicus (strain DSM 2379 / NBRC 103807 / OttBd1).